Reading from the N-terminus, the 63-residue chain is Small ribosomal subunit protein eS31 (63 aa).

Residues Cys34, Cys37, Cys53, and Cys56 each coordinate Zn(2+). The C4-type zinc finger occupies 34–56; the sequence is CPKCGSVMAFHREPVPRWHCGKC.

The protein belongs to the eukaryotic ribosomal protein eS31 family. In terms of assembly, part of the 30S ribosomal subunit. Requires Zn(2+) as cofactor.

This Pyrobaculum neutrophilum (strain DSM 2338 / JCM 9278 / NBRC 100436 / V24Sta) (Thermoproteus neutrophilus) protein is Small ribosomal subunit protein eS31.